We begin with the raw amino-acid sequence, 88 residues long: Parvalbumin beta 3 (88 aa).

N-acetylalanine is present on alanine 1. Positions 31 to 66 (KSPEEVKKFFAIIDQDHSGFIEEEELKLFLQTFSAG) constitute an EF-hand domain. Residues aspartate 44, aspartate 46, serine 48, phenylalanine 50, glutamate 52, glutamate 55, and glutamate 81 each contribute to the Ca(2+) site.

The protein belongs to the parvalbumin family.

In muscle, parvalbumin is thought to be involved in relaxation after contraction. It binds two calcium ions. In Merluccius productus (North Pacific hake), this protein is Parvalbumin beta 3.